The chain runs to 663 residues: Polyunsaturated fatty acid lipoxygenase ALOX15 (663 aa).

In terms of domain architecture, PLAT spans 2 to 115; it reads GLYRVRVSTG…ILSLPEGTGR (114 aa). The region spanning 116-663 is the Lipoxygenase domain; sequence TVVDDPQGLF…PSLVENSVAI (548 aa). Fe cation-binding residues include His361, His366, His541, His545, and Ile663.

It belongs to the lipoxygenase family. As to quaternary structure, interacts with PEBP1; in response to IL13/interleukin-13, prevents the interaction of PEBP1 with RAF1 to activate the ERK signaling cascade. Requires Fe cation as cofactor. As to expression, detected in tracheal epithelium.

It localises to the cytoplasm. It is found in the cytosol. Its subcellular location is the cell membrane. The protein localises to the lipid droplet. The catalysed reaction is (5Z,8Z,11Z,14Z)-eicosatetraenoate + O2 = (12S)-hydroperoxy-(5Z,8Z,10E,14Z)-eicosatetraenoate. The enzyme catalyses (5Z,8Z,11Z,14Z)-eicosatetraenoate + O2 = (15S)-hydroperoxy-(5Z,8Z,11Z,13E)-eicosatetraenoate. It carries out the reaction (9Z,12Z)-octadecadienoate + O2 = (13S)-hydroperoxy-(9Z,11E)-octadecadienoate. It catalyses the reaction (5Z,8Z,11Z,14Z)-eicosatetraenoate + 2 O2 = (14R,15S)-dihydroperoxy-(5Z,8Z,10E,12E)-eicosatetraenoate. The catalysed reaction is (5Z,8Z,11Z,14Z)-eicosatetraenoate + 2 O2 = (8S,15S)-dihydroperoxy-(5Z,9E,11Z,13E)-eicosatetraenoate. The enzyme catalyses (14S,15R)-epoxy-(5Z,8Z,11Z)-eicosatrienoate + O2 = (8S)-hydroperoxy-(14S,15R)-epoxy-(5Z,9E,11Z)-eicosatrienoate. It carries out the reaction (14S,15R)-epoxy-(5Z,8Z,11Z)-eicosatrienoate + O2 = (12S)-hydroperoxy-(14S,15R)-epoxy-(5Z,8Z,10E)-eicosatrienoate. It catalyses the reaction (14R,15S)-epoxy-(5Z,8Z,11Z)-eicosatrienoate + O2 = (5S)-hydroperoxy-(14R,15S)-epoxy-(6E,8Z,11Z)-eicosatrienoate. The catalysed reaction is (14R,15S)-epoxy-(5Z,8Z,11Z)-eicosatrienoate + O2 = (12S)-hydroperoxy-(14R,15S)-epoxy-(5Z,8Z,10E)-eicosatrienoate. The enzyme catalyses (15R)-hydroperoxy-(5Z,8Z,11Z,13E)-eicosatetraenoate = 15-oxo-(5Z,8Z,11Z,13E)-eicosatetraenoate + H2O. It carries out the reaction (15S)-hydroperoxy-(5Z,8Z,11Z,13E)-eicosatetraenoate = (14S,15S)-epoxy-(5Z,8Z,10E,12E)-eicosatetraenoate + H2O. It catalyses the reaction (12S)-hydroperoxy-(5Z,8Z,10E,14Z)-eicosatetraenoate = (8S)-hydroxy-(11S,12S)-epoxy-(5Z,9E,14Z)-eicosatrienoate. The catalysed reaction is (4Z,7Z,10Z,13Z,16Z)-docosapentaenoate + O2 = 14-hydroperoxy-(4Z,7Z,10Z,12E,16Z)-docosapentaenoate. The enzyme catalyses (7Z,10Z,13Z,16Z,19Z)-docosapentaenoate + O2 = 14-hydroperoxy-(7Z,10Z,12E,16Z,19Z)-docosapentaenoate. It carries out the reaction (4Z,7Z,10Z,13Z,16Z,19Z)-docosahexaenoate + O2 = (14S)-hydroperoxy-(4Z,7Z,10Z,12E,16Z,19Z)-docosahexaenoate. It catalyses the reaction (4Z,7Z,10Z,13Z,16Z,19Z)-docosahexaenoate + O2 = (17S)-hydroperoxy-(4Z,7Z,10Z,13Z,15E,19Z)-docosahexaenoate. The catalysed reaction is (7S)-hydroperoxy-(4Z,8E,10Z,13Z,16Z,19Z)-docosahexaenoate + O2 = (7S,14S)-dihydroperoxy-(4Z,8E,10Z,12E,16Z,19Z)-docosahexaenoate. The enzyme catalyses (7S)-hydroperoxy-(4Z,8E,10Z,13Z,16Z,19Z)-docosahexaenoate + O2 = (7S,17S)-dihydroperoxy-(4Z,8E,10Z,13Z,15E,19Z)-docosahexaenoate. It carries out the reaction (4Z,7Z,10Z,13Z,16Z,19Z)-docosahexaenoate + O2 = (11S)-hydroperoxy-(4Z,7Z,9E,13Z,16Z,19Z)-docosahexaenoate. It catalyses the reaction N-(5Z,8Z,11Z,14Z)-eicosatetraenoyl-taurine + O2 = N-(12S)-hydroperoxy-(5Z,8Z,10E,14Z)-eicosatetraenoyl-taurine. The catalysed reaction is N-(5Z,8Z,11Z,14Z)-eicosatetraenoyl-gamma-aminobutanoate + O2 = N-(12S)-hydroperoxy-(5Z,8Z,10E,14Z)-eicosatetraenoyl-gamma-aminobutanoate. The enzyme catalyses N-(5Z,8Z,11Z,14Z)-eicosatetraenoyl-glycine + O2 = N-(12S)-hydroperoxy-(5Z,8Z,10E,14Z)-eicosatetraenoyl-glycine. It carries out the reaction N-(5Z,8Z,11Z,14Z)-eicosatetraenoyl-L-alanine + O2 = N-(12S)-hydroperoxy-(5Z,8Z,10E,14Z)-eicosatetraenoyl-alanine. It catalyses the reaction N-(5Z,8Z,11Z,14Z)-eicosatetraenoyl-taurine + O2 = N-(15S)-hydroperoxy-(5Z,8Z,11Z,13E)-eicosatetraenoyl-taurine. The catalysed reaction is N-(5Z,8Z,11Z,14Z)-eicosatetraenoyl-gamma-aminobutanoate + O2 = N-(15S)-hydroperoxy-(5Z,8Z,11Z,13E)-eicosatetraenoyl-gamma-aminobutanoate. The enzyme catalyses N-(5Z,8Z,11Z,14Z)-eicosatetraenoyl-glycine + O2 = N-(15S)-hydroperoxy-(5Z,8Z,11Z,13E)-eicosatetraenoyl-glycine. It carries out the reaction N-(5Z,8Z,11Z,14Z)-eicosatetraenoyl-L-alanine + O2 = N-(15S)-hydroperoxy-(5Z,8Z,11Z,13E)-eicosatetraenoyl-alanine. It functions in the pathway lipid metabolism; hydroperoxy eicosatetraenoic acid biosynthesis. Its function is as follows. Non-heme iron-containing dioxygenase that catalyzes the stereo-specific peroxidation of free and esterified polyunsaturated fatty acids generating a spectrum of bioactive lipid mediators. It inserts peroxyl groups at C12 or C15 of arachidonate ((5Z,8Z,11Z,14Z)-eicosatetraenoate) producing both 12-hydroperoxyeicosatetraenoate/12-HPETE and 15-hydroperoxyeicosatetraenoate/15-HPETE. It may then act on 12-HPETE to produce hepoxilins, which may show pro-inflammatory properties. Can also peroxidize linoleate ((9Z,12Z)-octadecadienoate) to 13-hydroperoxyoctadecadienoate. May participate in the sequential oxidations of DHA ((4Z,7Z,10Z,13Z,16Z,19Z)-docosahexaenoate) to generate specialized pro-resolving mediators (SPMs)like resolvin D5 ((7S,17S)-diHPDHA) and (7S,14S)-diHPDHA, that actively down-regulate the immune response and have anti-aggregation properties with platelets. Can convert epoxy fatty acids to hydroperoxy-epoxides derivatives followed by an intramolecular nucleophilic substitution leading to the formation of monocyclic endoperoxides. Plays an important role during the maintenance of self-tolerance by peroxidizing membrane-bound phosphatidylethanolamine which can then signal the sorting process for clearance of apoptotic cells during inflammation and prevent an autoimmune response. In addition to its role in the immune and inflammatory responses, this enzyme may play a role in epithelial wound healing in the cornea through production of lipoxin A4 (LXA(4)) and docosahexaenoic acid-derived neuroprotectin D1 (NPD1; 10R,17S-HDHA), both lipid autacoids exhibit anti-inflammatory and neuroprotective properties. Furthermore, it may regulate actin polymerization which is crucial for several biological processes such as the phagocytosis of apoptotic cells. It is also implicated in the generation of endogenous ligands for peroxisome proliferator activated receptor (PPAR-gamma), hence modulating macrophage development and function. It may also exert a negative effect on skeletal development by regulating bone mass through this pathway. As well as participates in ER stress and downstream inflammation in adipocytes, pancreatic islets, and liver. Finally, it is also involved in the cellular response to IL13/interleukin-13. The protein is Polyunsaturated fatty acid lipoxygenase ALOX15 of Bos taurus (Bovine).